The chain runs to 245 residues: MKKIDLNADIAEGFPFDESLLQLLSSANIACGLHAGGAKEMQSAVKFAKENKVRIGAHPSFPDRENFGRTAMALSSQELIAHLRYQLGALKAICDGEGAVISYVKPHGALYNQAAKDEKIARVIAQTVYQFDPNLKLMGLAGSLMLRIAEEEKLQTISEVFADRHYMPDGSLVPRSQPNAMVESDKEAIQQVLQMVTKGQVNAIDGSLVPVKAESICLHGDNQHSLQFAKRIVEELEKNHIKITA.

Belongs to the LamB/PxpA family. Forms a complex composed of PxpA, PxpB and PxpC.

The catalysed reaction is 5-oxo-L-proline + ATP + 2 H2O = L-glutamate + ADP + phosphate + H(+). Functionally, catalyzes the cleavage of 5-oxoproline to form L-glutamate coupled to the hydrolysis of ATP to ADP and inorganic phosphate. This is 5-oxoprolinase subunit A from Haemophilus influenzae (strain 86-028NP).